The primary structure comprises 219 residues: Translation initiation factor 6 (219 aa).

This sequence belongs to the eIF-6 family.

In terms of biological role, binds to the 50S ribosomal subunit and prevents its association with the 30S ribosomal subunit to form the 70S initiation complex. The polypeptide is Translation initiation factor 6 (Methanosarcina mazei (strain ATCC BAA-159 / DSM 3647 / Goe1 / Go1 / JCM 11833 / OCM 88) (Methanosarcina frisia)).